The primary structure comprises 457 residues: MPRPASHLAPMPSDHPDFRSKSARLRCQPPRTNNCGTFKQPPSVAATSRPKPGNPFLQPPTKGTPPPKKKKKNHTEGCHTHEANPEPNTKHTETEPPIISHCPPPHPGPTATPNLLPCPNPTSSFCQNTRDSPSLPPNVQTWSIFPKHPSKDVTAQVKSQSVSHRAPITYQPPRPTTTSNPRISQSYHMKSISSYLSFAHMNITHTTEQHAENQPHWKTILDIAPFVSITFPAIMCLIFDEDSFEESPFLRFITLLLPFSYSAVQYALLYTNWKSHNKPEPILHTTLYYTLSLLLLAFTIISILSIIPFSLNEWDHAASFFYPIVLPSFTVPPAYLLSSSYFLVPRQIRLTDTVISILISVCSIVNVLLVFKEFNYYPYSAIISSISVLLQLLSEKHCLFKQSPPSTASSRAAVLILTLILAVLVYTFLGYGAIYILDDHFHLLGKMKSILPSEPHQ.

2 disordered regions span residues 1–112 (MPRP…PTAT) and 157–183 (VKSQ…NPRI). A compositionally biased stretch (basic and acidic residues) spans 74 to 94 (HTEGCHTHEANPEPNTKHTET). Positions 102 to 112 (CPPPHPGPTAT) are enriched in pro residues.

Belongs to the UPF0328 family.

This Encephalitozoon cuniculi (strain GB-M1) (Microsporidian parasite) protein is UPF0328 protein ECU05_0030.